A 989-amino-acid chain; its full sequence is SWI/SNF-related matrix-associated actin-dependent regulator of chromatin subfamily A containing DEAD/H box 1 homolog (989 aa).

A disordered region spans residues 1-288; it reads MSTTSDFQTG…RRAKRGETKN (288 aa). Residues 72 to 105 are compositionally biased toward acidic residues; it reads DDDDEDYVDETMPSEDEEDFDNNEEDEDDDDYEE. Positions 109–120 are enriched in basic residues; it reads RKRKAPSKKKLV. Over residues 124 to 140 the composition is skewed to basic and acidic residues; the sequence is ENYRREDSETPEPEMKR. Residues 187 to 200 show a composition bias toward acidic residues; sequence DDESEDDFINDEEI. Basic and acidic residues-rich tracts occupy residues 201 to 221 and 241 to 250; these read SEKG…GKDS and AQKEQKKKAE. A compositionally biased stretch (acidic residues) spans 251 to 276; that stretch reads SDEDWEEDEDDMNADGDETPSDDSDI. A compositionally biased stretch (basic and acidic residues) spans 277–288; sequence EERRAKRGETKN. One can recognise a Helicase ATP-binding domain in the interval 406–574; the sequence is IMMYNKDLNA…ISLMYFVLSK (169 aa). 419–426 is an ATP binding site; that stretch reads DEMGLGKT. The DEGH box signature appears at 525 to 528; sequence DEGH. One can recognise a Helicase C-terminal domain in the interval 757–912; sequence QLDVMLPEIQ…GVKGQLDEDA (156 aa). Residues 941 to 989 are disordered; that stretch reads RYDDVEDDSGDSKNGIDAEEAAKKEDEAVKEPVEKEQQKEEESQPSTSA. A compositionally biased stretch (basic and acidic residues) spans 950–982; sequence GDSKNGIDAEEAAKKEDEAVKEPVEKEQQKEEE.

Belongs to the SNF2/RAD54 helicase family.

Its subcellular location is the nucleus. The protein localises to the chromosome. The enzyme catalyses ATP + H2O = ADP + phosphate + H(+). Its function is as follows. DNA helicase that possesses intrinsic ATP-dependent nucleosome-remodeling activity and is both required for DNA repair and heterochromatin organization. Promotes DNA end resection of double-strand breaks (DSBs) following DNA damage: probably acts by weakening histone DNA interactions in nucleosomes flanking DSBs. The protein is SWI/SNF-related matrix-associated actin-dependent regulator of chromatin subfamily A containing DEAD/H box 1 homolog of Caenorhabditis elegans.